Reading from the N-terminus, the 135-residue chain is Large ribosomal subunit protein bL19 (135 aa).

It belongs to the bacterial ribosomal protein bL19 family.

Functionally, this protein is located at the 30S-50S ribosomal subunit interface and may play a role in the structure and function of the aminoacyl-tRNA binding site. In Protochlamydia amoebophila (strain UWE25), this protein is Large ribosomal subunit protein bL19.